The chain runs to 356 residues: Nucleotide-binding protein GDI1189/Gdia_1902 (356 aa).

Position 20-27 (glycine 20–serine 27) interacts with ATP. Residue aspartate 65–threonine 68 coordinates GTP. The segment at glutamate 285–alanine 313 is disordered.

Belongs to the RapZ-like family.

Functionally, displays ATPase and GTPase activities. This Gluconacetobacter diazotrophicus (strain ATCC 49037 / DSM 5601 / CCUG 37298 / CIP 103539 / LMG 7603 / PAl5) protein is Nucleotide-binding protein GDI1189/Gdia_1902.